Consider the following 345-residue polypeptide: Dihydroorotase (345 aa).

Residues histidine 13 and histidine 15 each contribute to the Zn(2+) site. Substrate-binding positions include 15–17 (HLR) and asparagine 41. The Zn(2+) site is built by lysine 99, histidine 136, histidine 174, and aspartate 247. Lysine 99 is subject to N6-carboxylysine. Histidine 136 is a substrate binding site. Residue aspartate 247 is part of the active site. Substrate is bound by residues histidine 251 and alanine 263.

Belongs to the metallo-dependent hydrolases superfamily. DHOase family. Class II DHOase subfamily. In terms of assembly, homodimer. It depends on Zn(2+) as a cofactor.

It carries out the reaction (S)-dihydroorotate + H2O = N-carbamoyl-L-aspartate + H(+). It functions in the pathway pyrimidine metabolism; UMP biosynthesis via de novo pathway; (S)-dihydroorotate from bicarbonate: step 3/3. Its function is as follows. Catalyzes the reversible cyclization of carbamoyl aspartate to dihydroorotate. The polypeptide is Dihydroorotase (Halorhodospira halophila (strain DSM 244 / SL1) (Ectothiorhodospira halophila (strain DSM 244 / SL1))).